We begin with the raw amino-acid sequence, 1134 residues long: Protocadherin 18 (1134 aa).

A signal peptide spans Met1–Ala27. Cadherin domains lie at Lys28–Phe137, Ser138–Phe246, Glu247–Ile354, Pro361–Phe465, Gln466–Val576, and His582–Met688. Topologically, residues Lys28 to Ser699 are extracellular. An N-linked (GlcNAc...) asparagine glycan is attached at Asn103. The N-linked (GlcNAc...) asparagine glycan is linked to Asn269. Asn559 carries an N-linked (GlcNAc...) asparagine glycan. Residues Met700–Phe720 form a helical membrane-spanning segment. Topologically, residues Ala721–Ser1134 are cytoplasmic. Disordered stretches follow at residues Leu769–Gln800, Ser868–Arg888, Asp941–Leu1004, and Phe1022–Lys1083. A compositionally biased stretch (polar residues) spans Gly791–Gln800. The segment covering Ser868–Ser877 has biased composition (basic and acidic residues). The segment at Ile892–Ser1134 is interaction with DAB1. Residues Glu1027–Lys1038 are compositionally biased toward basic and acidic residues. Polar residues predominate over residues Thr1059 to Ser1082.

As to quaternary structure, interacts with DAB1. Predominantly expressed in kidney and lung.

It localises to the cell membrane. Its function is as follows. Potential calcium-dependent cell-adhesion protein. This is Protocadherin 18 (Pcdh18) from Mus musculus (Mouse).